We begin with the raw amino-acid sequence, 394 residues long: Bifunctional enzyme Fae/Hps (394 aa).

Residues 1–162 form a formaldehyde-activating enzyme region; that stretch reads MEFRIGEALI…YEKDRSFHPF (162 aa). The Proton donor role is filled by H18. Substrate contacts are provided by D20, L49, K67, T69, and Q84. Positions 163-394 are 3-hexulose-6-phosphate synthase; that stretch reads VGRKLTKLWD…TDQFRIMTDF (232 aa).

It in the N-terminal section; belongs to the formaldehyde-activating enzyme family. The protein in the C-terminal section; belongs to the HPS/KGPDC family. HPS subfamily.

The enzyme catalyses 5,6,7,8-tetrahydromethanopterin + formaldehyde = 5,10-methylenetetrahydromethanopterin + H2O. It catalyses the reaction D-ribulose 5-phosphate + formaldehyde = D-arabino-hex-3-ulose 6-phosphate. It participates in carbohydrate biosynthesis; D-ribose 5-phosphate biosynthesis. In terms of biological role, catalyzes the condensation of formaldehyde with tetrahydromethanopterin (H(4)MPT) to 5,10-methylenetetrahydromethanopterin. Catalyzes the reversible formation of ribulose-5-phosphate and formaldehyde from 3-hexulose-6-phosphate. The sequence is that of Bifunctional enzyme Fae/Hps from Archaeoglobus fulgidus (strain ATCC 49558 / DSM 4304 / JCM 9628 / NBRC 100126 / VC-16).